The primary structure comprises 329 residues: Beta-tectorin (329 aa).

Residues 1-17 (MVTKAFVLLAIFAEASA) form the signal peptide. Positions 19–283 (SCAPNKADVI…LSCPVTCDKR (265 aa)) constitute a ZP domain. N-linked (GlcNAc...) asparagine glycosylation is found at Asn-80, Asn-104, Asn-116, and Asn-145. Cys-204 and Cys-264 are joined by a disulfide. The GPI-anchor amidated glycine moiety is linked to residue Gly-305. Residues 306 to 329 (FSSLYSFSDVLHHLIMMLGICAVL) constitute a propeptide, removed in mature form.

May form homomeric filament after self-association or heteromeric filament after association with alpha-tectorin. Interacts with CEACAM16. Post-translationally, the presence of a hydrophobic C-terminus preceded by a potential cleavage site strongly suggests that tectorins are synthesized as glycosylphosphatidylinositol-linked, membrane-bound precursors. Tectorins are targeted to the apical surface of the inner ear epithelia by the lipid and proteolytically released into the extracellular compartment.

The protein localises to the cell membrane. It is found in the secreted. The protein resides in the extracellular space. It localises to the extracellular matrix. Functionally, one of the major non-collagenous components of the tectorial membrane. The tectorial membrane is an extracellular matrix of the inner ear that covers the neuroepithelium of the cochlea and contacts the stereocilia bundles of specialized sensory hair cells. Sound induces movement of these hair cells relative to the tectorial membrane, deflects the stereocilia and leads to fluctuations in hair-cell membrane potential, transducing sound into electrical signals. This Homo sapiens (Human) protein is Beta-tectorin (TECTB).